The primary structure comprises 399 residues: Elongation factor Tu (399 aa).

Residues 10–204 enclose the tr-type G domain; sequence KPHVNIGTIG…AVDASIPEPE (195 aa). The G1 stretch occupies residues 19–26; sequence GHVDHGKT. 19–26 is a GTP binding site; sequence GHVDHGKT. Thr26 provides a ligand contact to Mg(2+). Residues 60–64 form a G2 region; the sequence is GITIN. Residues 81–84 are G3; sequence DCPG. Residues 81–85 and 136–139 each bind GTP; these read DCPGH and NKCD. Residues 136–139 are G4; the sequence is NKCD. Residues 174–176 are G5; it reads SGL.

The protein belongs to the TRAFAC class translation factor GTPase superfamily. Classic translation factor GTPase family. EF-Tu/EF-1A subfamily. Monomer.

It localises to the cytoplasm. It carries out the reaction GTP + H2O = GDP + phosphate + H(+). Its function is as follows. GTP hydrolase that promotes the GTP-dependent binding of aminoacyl-tRNA to the A-site of ribosomes during protein biosynthesis. This chain is Elongation factor Tu, found in Prochlorococcus marinus (strain MIT 9313).